A 723-amino-acid chain; its full sequence is Fatty acid oxidation complex subunit alpha (723 aa).

The tract at residues 1 to 189 is enoyl-CoA hydratase/isomerase; the sequence is MIYQADTLQV…KIGLLDAVVE (189 aa). Aspartate 296 contacts substrate. The segment at 311-723 is 3-hydroxyacyl-CoA dehydrogenase; sequence SKDTERAAVL…FYGAQQQGSI (413 aa). NAD(+) contacts are provided by residues methionine 325, aspartate 344, 401-403, lysine 408, and serine 430; that span reads VVE. Catalysis depends on histidine 451, which acts as the For 3-hydroxyacyl-CoA dehydrogenase activity. Asparagine 454 provides a ligand contact to NAD(+). Substrate is bound by residues asparagine 501 and tyrosine 661.

It in the N-terminal section; belongs to the enoyl-CoA hydratase/isomerase family. This sequence in the C-terminal section; belongs to the 3-hydroxyacyl-CoA dehydrogenase family. In terms of assembly, heterotetramer of two alpha chains (FadB) and two beta chains (FadA).

The enzyme catalyses a (3S)-3-hydroxyacyl-CoA + NAD(+) = a 3-oxoacyl-CoA + NADH + H(+). It carries out the reaction a (3S)-3-hydroxyacyl-CoA = a (2E)-enoyl-CoA + H2O. The catalysed reaction is a 4-saturated-(3S)-3-hydroxyacyl-CoA = a (3E)-enoyl-CoA + H2O. It catalyses the reaction (3S)-3-hydroxybutanoyl-CoA = (3R)-3-hydroxybutanoyl-CoA. The enzyme catalyses a (3Z)-enoyl-CoA = a 4-saturated (2E)-enoyl-CoA. It carries out the reaction a (3E)-enoyl-CoA = a 4-saturated (2E)-enoyl-CoA. It functions in the pathway lipid metabolism; fatty acid beta-oxidation. Its function is as follows. Involved in the aerobic and anaerobic degradation of long-chain fatty acids via beta-oxidation cycle. Catalyzes the formation of 3-oxoacyl-CoA from enoyl-CoA via L-3-hydroxyacyl-CoA. It can also use D-3-hydroxyacyl-CoA and cis-3-enoyl-CoA as substrate. This Vibrio parahaemolyticus serotype O3:K6 (strain RIMD 2210633) protein is Fatty acid oxidation complex subunit alpha.